The following is a 237-amino-acid chain: ATP synthase subunit a (237 aa).

Helical transmembrane passes span 17–37, 78–98, 178–198, and 201–221; these read LSDM…AVAA, LGVT…PFWL, ILLG…CGSI, and MVIM…AFIF.

This sequence belongs to the ATPase A chain family. As to quaternary structure, F-type ATPases have 2 components, CF(1) - the catalytic core - and CF(0) - the membrane proton channel. CF(1) has five subunits: alpha(3), beta(3), gamma(1), delta(1), epsilon(1). CF(0) has three main subunits: a(1), b(2) and c(9-12). The alpha and beta chains form an alternating ring which encloses part of the gamma chain. CF(1) is attached to CF(0) by a central stalk formed by the gamma and epsilon chains, while a peripheral stalk is formed by the delta and b chains.

It localises to the cell membrane. Its function is as follows. Key component of the proton channel; it plays a direct role in the translocation of protons across the membrane. In Bacillus caldotenax, this protein is ATP synthase subunit a.